The primary structure comprises 150 residues: FAD synthase (150 aa).

Residues 10 to 11 (VF), 15 to 18 (HPGH), Asp97, and Tyr124 each bind ATP.

The protein belongs to the archaeal FAD synthase family. Homodimer. It depends on a divalent metal cation as a cofactor.

The enzyme catalyses FMN + ATP + H(+) = FAD + diphosphate. It participates in cofactor biosynthesis; FAD biosynthesis; FAD from FMN: step 1/1. Functionally, catalyzes the transfer of the AMP portion of ATP to flavin mononucleotide (FMN) to produce flavin adenine dinucleotide (FAD) coenzyme. The polypeptide is FAD synthase (Methanopyrus kandleri (strain AV19 / DSM 6324 / JCM 9639 / NBRC 100938)).